Consider the following 59-residue polypeptide: Large ribosomal subunit protein bL32 (59 aa).

The segment at 1 to 59 (MAVQQNRKTRSKRGMRRSHDALSAAALSTDATTGEVHRRHHVSPDGFYRGKQVVEARDE) is disordered. Residues 7-16 (RKTRSKRGMR) are compositionally biased toward basic residues. Over residues 21 to 33 (ALSAAALSTDATT) the composition is skewed to low complexity.

This sequence belongs to the bacterial ribosomal protein bL32 family.

The polypeptide is Large ribosomal subunit protein bL32 (Marinobacter nauticus (strain ATCC 700491 / DSM 11845 / VT8) (Marinobacter aquaeolei)).